A 295-amino-acid polypeptide reads, in one-letter code: Small ribosomal subunit protein uS2 (295 aa).

Belongs to the universal ribosomal protein uS2 family.

The chain is Small ribosomal subunit protein uS2 from Rickettsia canadensis (strain McKiel).